The sequence spans 177 residues: Protein GrpE (177 aa).

The protein belongs to the GrpE family. Homodimer.

It is found in the cytoplasm. Its function is as follows. Participates actively in the response to hyperosmotic and heat shock by preventing the aggregation of stress-denatured proteins, in association with DnaK and GrpE. It is the nucleotide exchange factor for DnaK and may function as a thermosensor. Unfolded proteins bind initially to DnaJ; upon interaction with the DnaJ-bound protein, DnaK hydrolyzes its bound ATP, resulting in the formation of a stable complex. GrpE releases ADP from DnaK; ATP binding to DnaK triggers the release of the substrate protein, thus completing the reaction cycle. Several rounds of ATP-dependent interactions between DnaJ, DnaK and GrpE are required for fully efficient folding. In Thermus thermophilus (strain ATCC BAA-163 / DSM 7039 / HB27), this protein is Protein GrpE.